Consider the following 423-residue polypeptide: MALKVLLEQEKTFFTLLVLLGYLSCKVTCESGDCRQQEFRDRSGNCVPCNQCGPGMELSKECGFGYGEDAQCVTCRLHRFKEDWGFQKCKPCLDCAVVNRFQKANCSATSDAICGDCLPGFYRKTKLVGFQDMECVPCGDPPPPYEPHCASKVNLVKIASTASSPRDTALAAVICSALATVLLALLILCVIYCKRQFMEKKPSWSLRSQDIQYNGSELSCFDRPQLHEYAHRACCQCRRDSVQTCGPVRLLPSMCCEEACSPNPATLGCGVHSAASLQARNAGPAGEMVPTFFGSLTQSICGEFSDAWPLMQNPMGGDNISFCDSYPELTGEDIHSLNPELESSTSLDSNSSQDLVGGAVPVQSHSENFTAATDLSRYNNTLVESASTQDALTMRSQLDQESGAVIHPATQTSLQVRQRLGSL.

Positions 1–29 (MALKVLLEQEKTFFTLLVLLGYLSCKVTC) are cleaved as a signal peptide. Residues 30 to 170 (ESGDCRQQEF…TASSPRDTAL (141 aa)) lie on the Extracellular side of the membrane. TNFR-Cys repeat units lie at residues 33–72 (DCRQ…DAQC), 74–114 (TCRL…DAIC), and 116–149 (DCLP…EPHC). Cystine bridges form between Cys34–Cys46, Cys49–Cys62, Cys52–Cys72, Cys75–Cys89, Cys92–Cys106, Cys95–Cys114, Cys117–Cys135, and Cys138–Cys149. N-linked (GlcNAc...) asparagine glycosylation is present at Asn105. A helical membrane pass occupies residues 171–191 (AAVICSALATVLLALLILCVI). Topologically, residues 192–423 (YCKRQFMEKK…LQVRQRLGSL (232 aa)) are cytoplasmic.

In terms of assembly, associates with TRAF1, TRAF2, TRAF3 and TRAF5. Interacts with LINGO1. As to expression, highly expressed in prostate. Detected at lower levels in thymus, spleen, testis, uterus, small intestine, colon and peripheral blood leukocytes.

The protein resides in the membrane. In terms of biological role, can mediate activation of JNK and NF-kappa-B. May promote caspase-independent cell death. In Homo sapiens (Human), this protein is Tumor necrosis factor receptor superfamily member 19 (TNFRSF19).